The following is a 127-amino-acid chain: Riboflavin kinase (127 aa).

A CDP-binding site is contributed by 10 to 15 (GLGEGK). 2 residues coordinate Mg(2+): T39 and N41. Residues T96 and E104 each contribute to the FMN site. Position 109–112 (109–112 (IQLR)) interacts with CDP.

It belongs to the archaeal riboflavin kinase family. Requires Mg(2+) as cofactor.

The enzyme catalyses riboflavin + CTP = CDP + FMN + H(+). It participates in cofactor biosynthesis; FMN biosynthesis; FMN from riboflavin (CTP route): step 1/1. Functionally, catalyzes the CTP-dependent phosphorylation of riboflavin (vitamin B2) to form flavin mononucleotide (FMN). This is Riboflavin kinase from Methanococcus maripaludis (strain DSM 14266 / JCM 13030 / NBRC 101832 / S2 / LL).